The primary structure comprises 577 residues: Arginine--tRNA ligase (577 aa).

The short motif at 132–142 is the 'HIGH' region element; sequence ANPTGPLHVGH.

Belongs to the class-I aminoacyl-tRNA synthetase family. In terms of assembly, monomer.

The protein localises to the cytoplasm. It carries out the reaction tRNA(Arg) + L-arginine + ATP = L-arginyl-tRNA(Arg) + AMP + diphosphate. The sequence is that of Arginine--tRNA ligase from Pelagibacter ubique (strain HTCC1062).